The following is a 168-amino-acid chain: Prolyl-tRNA synthetase associated domain-containing protein 1 (168 aa).

It belongs to the PRORSD1 family.

This Xenopus laevis (African clawed frog) protein is Prolyl-tRNA synthetase associated domain-containing protein 1 (prorsd1p).